A 388-amino-acid chain; its full sequence is uncharacterized protein (388 aa).

Residues Cys18, Cys24, Cys27, and Cys99 each coordinate [4Fe-4S] cluster. Residues Gln212, Glu262, and Asn313 each contribute to the S-adenosyl-L-methionine site. Cys343 functions as the Nucleophile in the catalytic mechanism.

This sequence belongs to the class I-like SAM-binding methyltransferase superfamily. RNA M5U methyltransferase family.

This is an uncharacterized protein from Bdellovibrio bacteriovorus (strain ATCC 15356 / DSM 50701 / NCIMB 9529 / HD100).